Here is a 76-residue protein sequence, read N- to C-terminus: Glutathione S-transferase (76 aa).

In terms of domain architecture, GST N-terminal spans 1-40 (XVAFETVPVDLMKGEHKQPAYLALQPFGTVPAVVDGDYXL). In terms of domain architecture, GST C-terminal spans 41 to 76 (LSAVLDVYEAHLHGYLAGDFVSLADLAHLPFTDYLV).

This sequence belongs to the GST superfamily. Theta family.

It is found in the cytoplasm. The enzyme catalyses RX + glutathione = an S-substituted glutathione + a halide anion + H(+). In terms of biological role, conjugation of reduced glutathione to a wide number of exogenous and endogenous hydrophobic electrophiles. This chain is Glutathione S-transferase, found in Brassica oleracea var. italica (Broccoli).